We begin with the raw amino-acid sequence, 156 residues long: Small ribosomal subunit protein uS7 (156 aa).

Belongs to the universal ribosomal protein uS7 family. As to quaternary structure, part of the 30S ribosomal subunit. Contacts proteins S9 and S11.

Its function is as follows. One of the primary rRNA binding proteins, it binds directly to 16S rRNA where it nucleates assembly of the head domain of the 30S subunit. Is located at the subunit interface close to the decoding center, probably blocks exit of the E-site tRNA. The sequence is that of Small ribosomal subunit protein uS7 from Teredinibacter turnerae (strain ATCC 39867 / T7901).